The chain runs to 252 residues: Aspartate/glutamate leucyltransferase (252 aa).

Belongs to the R-transferase family. Bpt subfamily.

It localises to the cytoplasm. The catalysed reaction is N-terminal L-glutamyl-[protein] + L-leucyl-tRNA(Leu) = N-terminal L-leucyl-L-glutamyl-[protein] + tRNA(Leu) + H(+). The enzyme catalyses N-terminal L-aspartyl-[protein] + L-leucyl-tRNA(Leu) = N-terminal L-leucyl-L-aspartyl-[protein] + tRNA(Leu) + H(+). Its function is as follows. Functions in the N-end rule pathway of protein degradation where it conjugates Leu from its aminoacyl-tRNA to the N-termini of proteins containing an N-terminal aspartate or glutamate. This chain is Aspartate/glutamate leucyltransferase, found in Polynucleobacter necessarius subsp. necessarius (strain STIR1).